The following is a 305-amino-acid chain: uncharacterized protein (305 aa).

The segment at 267-287 (ADEQEKNWNGGAKKNARAEPA) is disordered.

Belongs to the DnaB/DnaD family.

This is an uncharacterized protein from Listeria innocua serovar 6a (strain ATCC BAA-680 / CLIP 11262).